Reading from the N-terminus, the 895-residue chain is Probable methyltransferase PMT27 (895 aa).

The Cytoplasmic segment spans residues 1–16 (MAFGRGRGNKRTSTSS). The helical; Signal-anchor for type II membrane protein transmembrane segment at 17–37 (YASTITMVIFVALCVFGVWML) threads the bilayer. Residues 38-895 (SSNSVIPPQI…KGFWRPETSQ (858 aa)) are Lumenal-facing. The span at 43–52 (IPPQITQGST) shows a compositional bias: polar residues. The disordered stretch occupies residues 43–362 (IPPQITQGST…QRQTSESNTV (320 aa)). Basic and acidic residues predominate over residues 90 to 114 (NPGKLPDDAVKSEDEQRKSAKEKSE). The span at 115–127 (TTSSKTQTQETQQ) shows a compositional bias: low complexity. Over residues 129 to 143 (NDDKISEEKEKDNGK) the composition is skewed to basic and acidic residues. Asparagine 145 carries an N-linked (GlcNAc...) asparagine glycan. The span at 154–174 (GQMKKVVKEFEKEQKQQRDED) shows a compositional bias: basic and acidic residues. Over residues 176–191 (GTQPKGTQGQEQGQGK) the composition is skewed to low complexity. 2 stretches are compositionally biased toward polar residues: residues 199 to 232 (GNKQ…GETS) and 243 to 256 (PEEQ…TGQQ). Positions 257–320 (NEEKTTASEE…RKDEKKHEQG (64 aa)) are enriched in basic and acidic residues. Positions 337–346 (SQKSWKSQAT) are enriched in polar residues. N-linked (GlcNAc...) asparagine glycans are attached at residues asparagine 375 and asparagine 709.

The protein belongs to the methyltransferase superfamily.

The protein localises to the endoplasmic reticulum membrane. The chain is Probable methyltransferase PMT27 from Arabidopsis thaliana (Mouse-ear cress).